A 502-amino-acid polypeptide reads, in one-letter code: MAAPLLMIIKNQTDHRQDPNPNPTHLSSSIQEAKSIAKISLPLILTGLLLYSRSMISMLFLGRLNDLSALSGGSLALGFANITGYSLLSGLSIGMEPICVQAFGAKRFKLLGLALQRTTLLLLLCSLPISILWLNIKKILLFFGQDEEISNQAEIFILFSLPDLILQSFLHPIRIYLRSQSITLPLTYSAFFAVLLHIPINYLLVSSLGLGLKGVALGAIWTNVNLLGFLIIYIVFSGVYQKTWGGFSMDCFKGWRSLMKLAIPSCVSVCLEWWWYEIMILLCGLLLNPQATVASMGILIQTTALIYIFPSSLSISVSTRVGNELGANQPDKARIAARTGLSLSLGLGLLAMFFALMVRNCWARLFTDEEEIVKLTSMVLPIIGLCELGNCPQTTLCGVLRGSARPKLGANINLCCFYFVGMPVAVWLSFFSGFDFKGLWLGLFAAQGSCLISMLVVLARTDWEVEVHRAKELMTRSCDGDEDDGNTPFLLDSLDIEENLVF.

12 helical membrane passes run 41 to 61 (LPLI…MLFL), 75 to 95 (LALG…SIGM), 123 to 143 (LLCS…LLFF), 153 to 173 (AEIF…LHPI), 190 to 210 (AFFA…SLGL), 216 to 236 (ALGA…YIVF), 267 to 287 (VSVC…GLLL), 293 to 313 (VASM…PSSL), 338 to 358 (RTGL…ALMV), 372 to 392 (IVKL…GNCP), 414 to 434 (LCCF…FSGF), and 439 to 459 (LWLG…VVLA).

It belongs to the multi antimicrobial extrusion (MATE) (TC 2.A.66.1) family.

Its subcellular location is the membrane. The protein is Protein DETOXIFICATION 49 of Arabidopsis thaliana (Mouse-ear cress).